We begin with the raw amino-acid sequence, 589 residues long: Actin-histidine N-methyltransferase (589 aa).

Positions 1 to 22 (MGKKSRVKTQKSGTGATATVSP) are disordered. The segment covering 10-20 (QKSGTGATATV) has biased composition (polar residues). Residues R75, 104–106 (EGF), R254, 275–279 (DMCNH), and 325–327 (SGF) each bind S-adenosyl-L-methionine. An SET domain is found at 94-314 (EGFEMVNFKE…AGEQIYIFYG (221 aa)). Phosphoserine is present on S513. The interval 547-589 (LVNGERSFPNGTRSEEDLKQEERKRAKGDAKESSSDSTDAVKE) is disordered. The segment covering 559 to 589 (RSEEDLKQEERKRAKGDAKESSSDSTDAVKE) has biased composition (basic and acidic residues).

This sequence belongs to the class V-like SAM-binding methyltransferase superfamily. SETD3 actin-histidine methyltransferase family. Interacts with MYOD1. In terms of processing, phosphorylated by GSK3B, which is required for recognition by the SCF(FBXW7) complex and subsequent degradation. Post-translationally, ubiquitinated by the SCF(FBXW7) complex following phosphorylation by GSK3B, leading to its degradation by the proteasome.

The protein resides in the cytoplasm. It is found in the nucleus. It catalyses the reaction L-histidyl-[protein] + S-adenosyl-L-methionine = N(tele)-methyl-L-histidyl-[protein] + S-adenosyl-L-homocysteine + H(+). Its function is as follows. Protein-histidine N-methyltransferase that specifically mediates 3-methylhistidine (tele-methylhistidine) methylation of actin at 'His-73'. Histidine methylation of actin is required for smooth muscle contraction of the laboring uterus during delivery. Does not have protein-lysine N-methyltransferase activity and probably only catalyzes histidine methylation of actin. The sequence is that of Actin-histidine N-methyltransferase from Dasypus novemcinctus (Nine-banded armadillo).